We begin with the raw amino-acid sequence, 249 residues long: 3alpha-hydroxy bile acid-CoA-ester 3-dehydrogenase 2 (249 aa).

NAD(+) is bound by residues 15 to 18, glutamate 38, glutamate 42, and asparagine 92; that span reads TRGI. Position 144 (serine 144) interacts with substrate. Active-site proton donor/acceptor residues include tyrosine 157 and lysine 161. NAD(+) is bound by residues lysine 161 and 190 to 192; that span reads VNT.

It belongs to the short-chain dehydrogenases/reductases (SDR) family. As to quaternary structure, homotetramer.

The enzyme catalyses a 3alpha-hydroxy bile acid CoA + NAD(+) = a 3-oxo bile acid CoA + NADH + H(+). It catalyses the reaction choloyl-CoA + NAD(+) = 7alpha,12alpha-dihydroxy-3-oxochol-24-oyl-CoA + NADH + H(+). It carries out the reaction chenodeoxycholoyl-CoA + NAD(+) = 7alpha-hydroxy-3-oxochol-24-oyl-CoA + NADH + H(+). The catalysed reaction is deoxycholoyl-CoA + NAD(+) = 12alpha-hydroxy-3-oxocholan-24-oyl-CoA + NADH + H(+). The enzyme catalyses lithocholoyl-CoA + NAD(+) = 3-oxocholan-24-oyl-CoA + NADH + H(+). Its pathway is lipid metabolism; bile acid biosynthesis. In terms of biological role, involved in the multi-step bile acid 7alpha-dehydroxylation pathway that transforms primary bile acids to secondary bile acids in the human gut. Catalyzes the oxidation of C3-hydroxyl group of CoA conjugated bile acids generating a C3-oxo bile acid intermediate. Can use choloyl-CoA, chenodeoxycholoyl-CoA, deoxycholoyl-CoA, and lithocholoyl-CoA as substrates with similar efficiency. Highly prefers NAD over NADP as cosubstrate. Also catalyzes the reverse reactions; in vitro, the preferred direction of reaction depends on the pH. Has very little activity with unconjugated (non-CoA) bile acid substrates. The chain is 3alpha-hydroxy bile acid-CoA-ester 3-dehydrogenase 2 (baiA2) from Clostridium scindens (strain JCM 10418 / VPI 12708).